Here is a 464-residue protein sequence, read N- to C-terminus: MEFLPLFHNLRGSRVLVVGGGEIALRKSRLLADAGAVLRVVAPQIEDQLRELVQGSGGELMLRGYQEADLDGCTLIIAATDDEPLNAQVSSDAKRRCVPVNVVDAPALCSVIFPAIVDRSPLVIAVSSGGDAPVLARLIRAKLETWIPSTYGQLAGLAARFRAQVKGLYPDVQQRRAFWEEVFQGPIADRQLAGQGDEAERLLIEKVNGAPPYAPGEVYLVGAGPGDPDLLTFRALRLMQQADVVLYDRLVAPAILELCRRDAERIYVGKRRADHAVPQDQINQQLVDLAKQGKRVLRLKGGDPFIFGRGGEEIEELAAHGIPFQVVPGITAASGCAAYAGIPLTHRDYAQSVRFITGHLKNGTSDLPWQDLVGPSQTLVFYMGLIGLPIICEQLIKHGRAADTPAALIQQGTTSNQRVFTGTLADLPRMVAEHEVHAPTLVIVGEVVVLREKLKWFEGAQSQV.

The segment at 1-203 (MEFLPLFHNL…GQGDEAERLL (203 aa)) is precorrin-2 dehydrogenase /sirohydrochlorin ferrochelatase. Residues 22 to 23 (EI) and 43 to 44 (PQ) each bind NAD(+). S128 bears the Phosphoserine mark. The tract at residues 216-464 (GEVYLVGAGP…KWFEGAQSQV (249 aa)) is uroporphyrinogen-III C-methyltransferase. P225 serves as a coordination point for S-adenosyl-L-methionine. Catalysis depends on D248, which acts as the Proton acceptor. K270 (proton donor) is an active-site residue. Residues 301–303 (GGD), I306, 331–332 (TA), M383, and G412 each bind S-adenosyl-L-methionine.

It in the N-terminal section; belongs to the precorrin-2 dehydrogenase / sirohydrochlorin ferrochelatase family. The protein in the C-terminal section; belongs to the precorrin methyltransferase family.

It catalyses the reaction uroporphyrinogen III + 2 S-adenosyl-L-methionine = precorrin-2 + 2 S-adenosyl-L-homocysteine + H(+). The enzyme catalyses precorrin-2 + NAD(+) = sirohydrochlorin + NADH + 2 H(+). The catalysed reaction is siroheme + 2 H(+) = sirohydrochlorin + Fe(2+). It functions in the pathway cofactor biosynthesis; adenosylcobalamin biosynthesis; precorrin-2 from uroporphyrinogen III: step 1/1. It participates in cofactor biosynthesis; adenosylcobalamin biosynthesis; sirohydrochlorin from precorrin-2: step 1/1. Its pathway is porphyrin-containing compound metabolism; siroheme biosynthesis; precorrin-2 from uroporphyrinogen III: step 1/1. The protein operates within porphyrin-containing compound metabolism; siroheme biosynthesis; siroheme from sirohydrochlorin: step 1/1. It functions in the pathway porphyrin-containing compound metabolism; siroheme biosynthesis; sirohydrochlorin from precorrin-2: step 1/1. Its function is as follows. Multifunctional enzyme that catalyzes the SAM-dependent methylations of uroporphyrinogen III at position C-2 and C-7 to form precorrin-2 via precorrin-1. Then it catalyzes the NAD-dependent ring dehydrogenation of precorrin-2 to yield sirohydrochlorin. Finally, it catalyzes the ferrochelation of sirohydrochlorin to yield siroheme. This Pseudomonas fluorescens (strain SBW25) protein is Siroheme synthase.